The sequence spans 166 residues: Glutamyl-tRNA(Gln) amidotransferase subunit C, mitochondrial (166 aa).

The transit peptide at Met-1–Tyr-44 directs the protein to the mitochondrion.

Belongs to the GatC family. Subunit of the heterotrimeric GatCAB amidotransferase (AdT) complex, composed of A, B and C subunits.

The protein localises to the mitochondrion. The catalysed reaction is L-glutamyl-tRNA(Gln) + L-glutamine + ATP + H2O = L-glutaminyl-tRNA(Gln) + L-glutamate + ADP + phosphate + H(+). Functionally, allows the formation of correctly charged Gln-tRNA(Gln) through the transamidation of misacylated Glu-tRNA(Gln) in the mitochondria. The reaction takes place in the presence of glutamine and ATP through an activated gamma-phospho-Glu-tRNA(Gln). In Anopheles darlingi (Mosquito), this protein is Glutamyl-tRNA(Gln) amidotransferase subunit C, mitochondrial.